Consider the following 326-residue polypeptide: DNA-directed RNA polymerase subunit alpha (326 aa).

The interval 1 to 232 is alpha N-terminal domain (alpha-NTD); sequence MQGSARNFLK…EQLSSFVELE (232 aa). An alpha C-terminal domain (alpha-CTD) region spans residues 246–326; it reads FDPQLLAAVD…NWPPVDLMSE (81 aa).

It belongs to the RNA polymerase alpha chain family. In terms of assembly, homodimer. The RNAP catalytic core consists of 2 alpha, 1 beta, 1 beta' and 1 omega subunit. When a sigma factor is associated with the core the holoenzyme is formed, which can initiate transcription.

It catalyses the reaction RNA(n) + a ribonucleoside 5'-triphosphate = RNA(n+1) + diphosphate. In terms of biological role, DNA-dependent RNA polymerase catalyzes the transcription of DNA into RNA using the four ribonucleoside triphosphates as substrates. This chain is DNA-directed RNA polymerase subunit alpha, found in Ruthia magnifica subsp. Calyptogena magnifica.